We begin with the raw amino-acid sequence, 255 residues long: Ribosomal RNA small subunit methyltransferase G (255 aa).

Residues 1–44 (MSSPGRPKGEYRSAQHAGAVAGPPGRPDGEHRGSSGADPNGRLR) are disordered. Residues Gly-118, Leu-123, 169-170 (VE), and Arg-183 contribute to the S-adenosyl-L-methionine site.

This sequence belongs to the methyltransferase superfamily. RNA methyltransferase RsmG family.

It is found in the cytoplasm. It carries out the reaction guanosine(527) in 16S rRNA + S-adenosyl-L-methionine = N(7)-methylguanosine(527) in 16S rRNA + S-adenosyl-L-homocysteine. Its function is as follows. Specifically methylates the N7 position of guanine in position 527 of 16S rRNA. The chain is Ribosomal RNA small subunit methyltransferase G from Bordetella petrii (strain ATCC BAA-461 / DSM 12804 / CCUG 43448).